Consider the following 307-residue polypeptide: MRNRGFGRRELLVAMAMLVSVTGCARHASGARPASTTLPAGADLADRFAELERRYDARLGVYVPATGTTAAIEYRADERFAFCSTFKAPLVAAVLHQNPLTHLDKLITYTSDDIRSISPVAQQHVQTGMTIGQLCDAAIRYSDGTAANLLLADLGGPGGGTAAFTGYLRSLGDTVSRLDAEEPELNRDPPGDERDTTTPHAIALVLQQLVLGNALPPDKRALLTDWMARNTTGAKRIRAGFPADWKVIDKTGTGDYGRANDIAVVWSPTGVPYVVAVMSDRAGGGYDAEPREALLAEAATCVAGVLA.

A signal peptide (tat-type signal) is located at residues 1 to 34 (MRNRGFGRRELLVAMAMLVSVTGCARHASGARPA). Catalysis depends on S84, which acts as the Acyl-ester intermediate. Position 142 (S142) interacts with substrate. The Proton acceptor role is filled by E182. 251 to 253 (TGT) provides a ligand contact to substrate.

The protein belongs to the class-A beta-lactamase family. Monomer. In terms of processing, exported by the Tat system. The position of the signal peptide cleavage has not been experimentally proven.

The protein localises to the periplasm. Its subcellular location is the secreted. The catalysed reaction is a beta-lactam + H2O = a substituted beta-amino acid. With respect to regulation, is inhibited by clavulanate. Extended spectrum beta-lactamase (ESBL) that inactivates beta-lactam antibiotics by hydrolyzing the amide group of the beta-lactam ring. Displays high levels of penicillinase and cephalosporinase activity as well as measurable activity with carbapenems, including imipenem and meropenem. Plays a primary role in the intrinsic resistance of mycobacteria to beta-lactam antibiotics. The protein is Beta-lactamase (blaC) of Mycobacterium bovis (strain ATCC BAA-935 / AF2122/97).